Reading from the N-terminus, the 314-residue chain is 2-oxo-3-(phosphooxy)propyl 3-oxoalkanoate synthase (314 aa).

It belongs to the AfsA family.

The enzyme catalyses a medium-chain 3-oxoacyl-[ACP] + dihydroxyacetone phosphate = a (4-alkanoyl-5-oxo-2,5-dihydrofuran-3-yl)methyl phosphate + holo-[ACP] + H2O. In terms of biological role, involved of the biosynthesis of S.coelicolor butanolide 1 (SCB1), a gamma-butyrolactone that triggers antibiotic production. In Streptomyces coelicolor (strain ATCC BAA-471 / A3(2) / M145), this protein is 2-oxo-3-(phosphooxy)propyl 3-oxoalkanoate synthase.